Consider the following 329-residue polypeptide: T-lymphocyte activation antigen CD86 (329 aa).

Positions 1-23 are cleaved as a signal peptide; that stretch reads MDPQCTMGLSNILFVMAFLLSGA. The Extracellular portion of the chain corresponds to 24-247; the sequence is APLKIQAYFN…DPQPPPDHIP (224 aa). Residues Asn-33, Asn-47, Asn-135, Asn-146, Asn-154, Asn-177, Asn-192, and Asn-213 are each glycosylated (N-linked (GlcNAc...) asparagine). The Ig-like V-type domain occupies 33 to 131; it reads NETADLPCQF…RIHQMNSELS (99 aa). A disulfide bridge connects residues Cys-40 and Cys-110. Residues 150–225 enclose the Ig-like C2-type domain; that stretch reads NVYINLTCSS…IFCILETDKT (76 aa). Cys-157 and Cys-218 form a disulfide bridge. Residues 248-268 traverse the membrane as a helical segment; it reads WITAVLPTVIICVMVFCLILW. Residues 269 to 329 lie on the Cytoplasmic side of the membrane; sequence KWKKKKRPRN…SSCDKSDTCF (61 aa). The segment at 277–329 is disordered; that stretch reads RNSYKCGTNTMEREESEQTKKREKIHIPERSDEAQRVFKSSKTSSCDKSDTCF. Over residues 287–312 the composition is skewed to basic and acidic residues; that stretch reads MEREESEQTKKREKIHIPERSDEAQR.

As to quaternary structure, homodimer. Interacts with MARCH8. Interacts (via cytoplasmic domain) with PHB1 and PHB2; the interactions increases after priming with CD40. Interacts with CD28. In terms of assembly, (Microbial infection) Interacts with adenovirus subgroup b fiber protein. (Microbial infection) Interacts with Orthopoxvirus OPG038/M2 protein, inhibiting the interaction with CTLA4 and CD28. Polyubiquitinated; which is promoted by MARCH8 and results in endocytosis and lysosomal degradation. In terms of tissue distribution, expressed by activated B-lymphocytes and monocytes.

The protein resides in the cell membrane. In terms of biological role, receptor involved in the costimulatory signal essential for T-lymphocyte proliferation and interleukin-2 production, by binding CD28 or CTLA-4. May play a critical role in the early events of T-cell activation and costimulation of naive T-cells, such as deciding between immunity and anergy that is made by T-cells within 24 hours after activation. Also involved in the regulation of B cells function, plays a role in regulating the level of IgG(1) produced. Upon CD40 engagement, activates NF-kappa-B signaling pathway via phospholipase C and protein kinase C activation. Functionally, interferes with the formation of CD86 clusters, and thus acts as a negative regulator of T-cell activation. Its function is as follows. (Microbial infection) Acts as a receptor for adenovirus subgroup B. This Homo sapiens (Human) protein is T-lymphocyte activation antigen CD86 (CD86).